The primary structure comprises 904 residues: Pentatricopeptide repeat-containing protein At4g30825, chloroplastic (904 aa).

Residues 1–61 constitute a chloroplast transit peptide; it reads MGSLRFSIPL…SSTRVLDKIR (61 aa). The segment at 75–94 is disordered; the sequence is NSASAAPVERSRSSKLSGDQ. PPR repeat units lie at residues 173–203, 209–243, 244–274, 278–312, 313–347, 348–382, 383–417, 418–452, 487–521, 522–553, 557–591, 592–622, 628–662, 663–697, 698–732, 733–766, 767–801, 802–836, 837–871, and 872–904; these read NFVA…LCGF, SYQV…GVRP, NVAT…MRKF, CESA…RVRL, KLEN…GFSP, NIIA…GLEP, DETS…GYKP, NSFN…GCQY, NQTS…DSAF, ESHL…MESD, NLHI…GVVL, DRIG…MDEQ, DVYL…GIHW, NQEM…GFTP, NTVT…GVVD, VISY…GFSV, SLEA…TSGP, DHYT…GLGP, DLCS…NIIP, and DKVT…QMGI.

It belongs to the PPR family. P subfamily.

It localises to the plastid. The protein resides in the chloroplast. This Arabidopsis thaliana (Mouse-ear cress) protein is Pentatricopeptide repeat-containing protein At4g30825, chloroplastic.